Here is a 91-residue protein sequence, read N- to C-terminus: Cell division topological specificity factor (91 aa).

This sequence belongs to the MinE family.

Its function is as follows. Prevents the cell division inhibition by proteins MinC and MinD at internal division sites while permitting inhibition at polar sites. This ensures cell division at the proper site by restricting the formation of a division septum at the midpoint of the long axis of the cell. This chain is Cell division topological specificity factor, found in Thermoanaerobacter pseudethanolicus (strain ATCC 33223 / 39E) (Clostridium thermohydrosulfuricum).